Reading from the N-terminus, the 1449-residue chain is Gag-Pol polyprotein (1449 aa).

Glycine 2 carries N-myristoyl glycine; by host lipidation. An interaction with Gp41 region spans residues 7-31 (VLTGGKLDQWESIYLRPGGKKKYRM). Residues 8–43 (LTGGKLDQWESIYLRPGGKKKYRMKHLVWASRELER) are interaction with host CALM1. Residues 12 to 19 (KLDQWESI) are interaction with host AP3D1. The interval 14–33 (DQWESIYLRPGGKKKYRMKH) is interaction with membrane phosphatidylinositol 4,5-bisphosphate and RNA. The Nuclear export signal motif lies at 16–22 (WESIYLR). A Nuclear localization signal motif is present at residues 26 to 32 (KKKYRMK). Residues 73–77 (EELRS) are interaction with membrane phosphatidylinositol 4,5-bisphosphate. Tyrosine 134 bears the Phosphotyrosine; by host mark. The interval 191–229 (NTVGGHQAAMQMLKEVINEEAADWDRTHPVPVGPLPPGQ) is interaction with human PPIA/CYPA and NUP153. The dimerization/Multimerization of capsid protein p24 stretch occupies residues 279–365 (YSPVSILEIK…GGPAHKARVL (87 aa)). CCHC-type zinc fingers lie at residues 393-410 (IKCFNCGKEGHLARNCKA) and 414-431 (GGCWKCGQEGHQMKDCKN). Residues 447 to 461 (ETRKLPPDNNKERAH) are compositionally biased toward basic and acidic residues. A disordered region spans residues 447–489 (ETRKLPPDNNKERAHSPATRELWVSGGEEHTGEGDAGEPGEDR). The interval 499–503 (PQITL) is dimerization of protease. The region spanning 518–587 (REALLDTGAD…TPVNIIGRNL (70 aa)) is the Peptidase A2 domain. The active-site For protease activity; shared with dimeric partner is aspartate 523. Dimerization of protease stretches follow at residues 547 to 553 (GIGGFIK) and 586 to 598 (NLLTQIGCTLNFP). The Reverse transcriptase domain maps to 641–831 (EGKISRIGPE…PPFLWMGYEL (191 aa)). The Mg(2+) site is built by aspartate 707, aspartate 782, and aspartate 783. An RT 'primer grip' region spans residues 824 to 832 (FLWMGYELH). Residues 995–1011 (WEAWWTDHWQATWIPEW) carry the Tryptophan repeat motif motif. The 124-residue stretch at 1031–1154 (ISGAETFYVD…VDKLVSSGIR (124 aa)) folds into the RNase H type-1 domain. Residues aspartate 1040, glutamate 1075, aspartate 1095, and aspartate 1146 each coordinate Mg(2+). The segment at 1160–1201 (DGIEKAQEDHDRYHSNWKAMASDFNLPPIVAKEIVASCDKCQ) adopts an Integrase-type zinc-finger fold. Residues histidine 1169, histidine 1173, cysteine 1197, and cysteine 1200 each coordinate Zn(2+). The 151-residue stretch at 1211-1361 (VNCSPGVWQL…TAGERIIDII (151 aa)) folds into the Integrase catalytic domain. Mg(2+)-binding residues include aspartate 1221, aspartate 1273, and glutamate 1309. The integrase-type DNA-binding region spans 1380-1427 (FRVYYRDSRDPIWKGPAKLLWKGEGAVVIQDNGDIKVVPRRKAKIIRD).

As to quaternary structure, homotrimer; further assembles as hexamers of trimers. Interacts with gp41 (via C-terminus). Interacts with host CALM1; this interaction induces a conformational change in the Matrix protein, triggering exposure of the myristate group. Interacts with host AP3D1; this interaction allows the polyprotein trafficking to multivesicular bodies during virus assembly. Part of the pre-integration complex (PIC) which is composed of viral genome, matrix protein, Vpr and integrase. Homodimer; the homodimer further multimerizes as homohexamers or homopentamers. Interacts with human PPIA/CYPA; This interaction stabilizes the capsid. Interacts with human NUP153. Interacts with host PDZD8; this interaction stabilizes the capsid. Interacts with monkey TRIM5; this interaction destabilizes the capsid. In terms of assembly, homodimer, whose active site consists of two apposed aspartic acid residues. As to quaternary structure, heterodimer of p66 RT and p51 RT (RT p66/p51). Heterodimerization of RT is essential for DNA polymerase activity. The overall folding of the subdomains is similar in p66 RT and p51 RT but the spatial arrangements of the subdomains are dramatically different. Homotetramer; may further associate as a homohexadecamer. Part of the pre-integration complex (PIC) which is composed of viral genome, matrix protein, Vpr and integrase. Interacts with human SMARCB1/INI1 and human PSIP1/LEDGF isoform 1. Interacts with human KPNA3; this interaction might play a role in nuclear import of the pre-integration complex. Interacts with human NUP153; this interaction might play a role in nuclear import of the pre-integration complex. The cofactor is Mg(2+). Specific enzymatic cleavages by the viral protease yield mature proteins. The protease is released by autocatalytic cleavage. The polyprotein is cleaved during and after budding, this process is termed maturation. Proteolytic cleavage of p66 RT removes the RNase H domain to yield the p51 RT subunit. Nucleocapsid protein p7 might be further cleaved after virus entry. Post-translationally, tyrosine phosphorylated presumably in the virion by a host kinase. Phosphorylation is apparently not a major regulator of membrane association. In terms of processing, phosphorylated possibly by host MAPK1; this phosphorylation is necessary for Pin1-mediated virion uncoating. Methylated by host PRMT6, impairing its function by reducing RNA annealing and the initiation of reverse transcription.

It is found in the host cell membrane. The protein resides in the host endosome. The protein localises to the host multivesicular body. It localises to the virion membrane. Its subcellular location is the host nucleus. It is found in the host cytoplasm. The protein resides in the virion. The enzyme catalyses Specific for a P1 residue that is hydrophobic, and P1' variable, but often Pro.. It carries out the reaction Endohydrolysis of RNA in RNA/DNA hybrids. Three different cleavage modes: 1. sequence-specific internal cleavage of RNA. Human immunodeficiency virus type 1 and Moloney murine leukemia virus enzymes prefer to cleave the RNA strand one nucleotide away from the RNA-DNA junction. 2. RNA 5'-end directed cleavage 13-19 nucleotides from the RNA end. 3. DNA 3'-end directed cleavage 15-20 nucleotides away from the primer terminus.. The catalysed reaction is 3'-end directed exonucleolytic cleavage of viral RNA-DNA hybrid.. It catalyses the reaction DNA(n) + a 2'-deoxyribonucleoside 5'-triphosphate = DNA(n+1) + diphosphate. With respect to regulation, protease: The viral protease is inhibited by many synthetic protease inhibitors (PIs), such as amprenavir, atazanavir, indinavir, loprinavir, nelfinavir, ritonavir and saquinavir. Use of protease inhibitors in tritherapy regimens permit more ambitious therapeutic strategies. Reverse transcriptase/ribonuclease H: RT can be inhibited either by nucleoside RT inhibitors (NRTIs) or by non nucleoside RT inhibitors (NNRTIs). NRTIs act as chain terminators, whereas NNRTIs inhibit DNA polymerization by binding a small hydrophobic pocket near the RT active site and inducing an allosteric change in this region. Classical NRTIs are abacavir, adefovir (PMEA), didanosine (ddI), lamivudine (3TC), stavudine (d4T), tenofovir (PMPA), zalcitabine (ddC), and zidovudine (AZT). Classical NNRTIs are atevirdine (BHAP U-87201E), delavirdine, efavirenz (DMP-266), emivirine (I-EBU), and nevirapine (BI-RG-587). The tritherapies used as a basic effective treatment of AIDS associate two NRTIs and one NNRTI. Functionally, mediates, with Gag polyprotein, the essential events in virion assembly, including binding the plasma membrane, making the protein-protein interactions necessary to create spherical particles, recruiting the viral Env proteins, and packaging the genomic RNA via direct interactions with the RNA packaging sequence (Psi). Gag-Pol polyprotein may regulate its own translation, by the binding genomic RNA in the 5'-UTR. At low concentration, the polyprotein would promote translation, whereas at high concentration, the polyprotein would encapsidate genomic RNA and then shut off translation. In terms of biological role, targets the polyprotein to the plasma membrane via a multipartite membrane-binding signal, that includes its myristoylated N-terminus. Matrix protein is part of the pre-integration complex. Implicated in the release from host cell mediated by Vpu. Binds to RNA. Its function is as follows. Forms the conical core that encapsulates the genomic RNA-nucleocapsid complex in the virion. Most core are conical, with only 7% tubular. The core is constituted by capsid protein hexamer subunits. The core is disassembled soon after virion entry. Host restriction factors such as TRIM5-alpha or TRIMCyp bind retroviral capsids and cause premature capsid disassembly, leading to blocks in reverse transcription. Capsid restriction by TRIM5 is one of the factors which restricts HIV-1 to the human species. Host PIN1 apparently facilitates the virion uncoating. On the other hand, interactions with PDZD8 or CYPA stabilize the capsid. Encapsulates and protects viral dimeric unspliced genomic RNA (gRNA). Binds these RNAs through its zinc fingers. Acts as a nucleic acid chaperone which is involved in rearangement of nucleic acid secondary structure during gRNA retrotranscription. Also facilitates template switch leading to recombination. As part of the polyprotein, participates in gRNA dimerization, packaging, tRNA incorporation and virion assembly. Functionally, aspartyl protease that mediates proteolytic cleavages of Gag and Gag-Pol polyproteins during or shortly after the release of the virion from the plasma membrane. Cleavages take place as an ordered, step-wise cascade to yield mature proteins. This process is called maturation. Displays maximal activity during the budding process just prior to particle release from the cell. Also cleaves Nef and Vif, probably concomitantly with viral structural proteins on maturation of virus particles. Hydrolyzes host EIF4GI and PABP1 in order to shut off the capped cellular mRNA translation. The resulting inhibition of cellular protein synthesis serves to ensure maximal viral gene expression and to evade host immune response. Also mediates cleavage of host YTHDF3. Mediates cleavage of host CARD8, thereby activating the CARD8 inflammasome, leading to the clearance of latent HIV-1 in patient CD4(+) T-cells after viral reactivation; in contrast, HIV-1 can evade CARD8-sensing when its protease remains inactive in infected cells prior to viral budding. In terms of biological role, multifunctional enzyme that converts the viral RNA genome into dsDNA in the cytoplasm, shortly after virus entry into the cell. This enzyme displays a DNA polymerase activity that can copy either DNA or RNA templates, and a ribonuclease H (RNase H) activity that cleaves the RNA strand of RNA-DNA heteroduplexes in a partially processive 3' to 5' endonucleasic mode. Conversion of viral genomic RNA into dsDNA requires many steps. A tRNA(3)-Lys binds to the primer-binding site (PBS) situated at the 5'-end of the viral RNA. RT uses the 3' end of the tRNA primer to perform a short round of RNA-dependent minus-strand DNA synthesis. The reading proceeds through the U5 region and ends after the repeated (R) region which is present at both ends of viral RNA. The portion of the RNA-DNA heteroduplex is digested by the RNase H, resulting in a ssDNA product attached to the tRNA primer. This ssDNA/tRNA hybridizes with the identical R region situated at the 3' end of viral RNA. This template exchange, known as minus-strand DNA strong stop transfer, can be either intra- or intermolecular. RT uses the 3' end of this newly synthesized short ssDNA to perform the RNA-dependent minus-strand DNA synthesis of the whole template. RNase H digests the RNA template except for two polypurine tracts (PPTs) situated at the 5'-end and near the center of the genome. It is not clear if both polymerase and RNase H activities are simultaneous. RNase H probably can proceed both in a polymerase-dependent (RNA cut into small fragments by the same RT performing DNA synthesis) and a polymerase-independent mode (cleavage of remaining RNA fragments by free RTs). Secondly, RT performs DNA-directed plus-strand DNA synthesis using the PPTs that have not been removed by RNase H as primers. PPTs and tRNA primers are then removed by RNase H. The 3' and 5' ssDNA PBS regions hybridize to form a circular dsDNA intermediate. Strand displacement synthesis by RT to the PBS and PPT ends produces a blunt ended, linear dsDNA copy of the viral genome that includes long terminal repeats (LTRs) at both ends. Its function is as follows. Catalyzes viral DNA integration into the host chromosome, by performing a series of DNA cutting and joining reactions. This enzyme activity takes place after virion entry into a cell and reverse transcription of the RNA genome in dsDNA. The first step in the integration process is 3' processing. This step requires a complex comprising the viral genome, matrix protein, Vpr and integrase. This complex is called the pre-integration complex (PIC). The integrase protein removes 2 nucleotides from each 3' end of the viral DNA, leaving recessed CA OH's at the 3' ends. In the second step, the PIC enters cell nucleus. This process is mediated through integrase and Vpr proteins, and allows the virus to infect a non dividing cell. This ability to enter the nucleus is specific of lentiviruses, other retroviruses cannot and rely on cell division to access cell chromosomes. In the third step, termed strand transfer, the integrase protein joins the previously processed 3' ends to the 5' ends of strands of target cellular DNA at the site of integration. The 5'-ends are produced by integrase-catalyzed staggered cuts, 5 bp apart. A Y-shaped, gapped, recombination intermediate results, with the 5'-ends of the viral DNA strands and the 3' ends of target DNA strands remaining unjoined, flanking a gap of 5 bp. The last step is viral DNA integration into host chromosome. This involves host DNA repair synthesis in which the 5 bp gaps between the unjoined strands are filled in and then ligated. Since this process occurs at both cuts flanking the HIV genome, a 5 bp duplication of host DNA is produced at the ends of HIV-1 integration. Alternatively, Integrase may catalyze the excision of viral DNA just after strand transfer, this is termed disintegration. The protein is Gag-Pol polyprotein (gag-pol) of Human immunodeficiency virus type 1 group N (isolate YBF30) (HIV-1).